We begin with the raw amino-acid sequence, 132 residues long: Small ribosomal subunit protein uS8c (132 aa).

The protein belongs to the universal ribosomal protein uS8 family. Part of the 30S ribosomal subunit.

It is found in the plastid. It localises to the chloroplast. In terms of biological role, one of the primary rRNA binding proteins, it binds directly to 16S rRNA central domain where it helps coordinate assembly of the platform of the 30S subunit. This is Small ribosomal subunit protein uS8c (rps8) from Pinus thunbergii (Japanese black pine).